A 292-amino-acid chain; its full sequence is Elongation factor Ts (292 aa).

The segment at 79–82 (TDFV) is involved in Mg(2+) ion dislocation from EF-Tu.

The protein belongs to the EF-Ts family.

The protein resides in the cytoplasm. In terms of biological role, associates with the EF-Tu.GDP complex and induces the exchange of GDP to GTP. It remains bound to the aminoacyl-tRNA.EF-Tu.GTP complex up to the GTP hydrolysis stage on the ribosome. This Mycoplasmoides gallisepticum (strain R(low / passage 15 / clone 2)) (Mycoplasma gallisepticum) protein is Elongation factor Ts.